Consider the following 126-residue polypeptide: MAILGLGTDIAEIERIEKALGRSGEPFAQRILSEDEMAKFSQLKQQGRYLAKRFAAKEAASKALGTGIAQGVTFHDFTVSNDELGKPVLMLSGVAQKMAQTMGVNHVHLSISDERHYAVATVILES.

Mg(2+)-binding residues include aspartate 9 and glutamate 58.

The protein belongs to the P-Pant transferase superfamily. AcpS family. Requires Mg(2+) as cofactor.

It is found in the cytoplasm. The catalysed reaction is apo-[ACP] + CoA = holo-[ACP] + adenosine 3',5'-bisphosphate + H(+). In terms of biological role, transfers the 4'-phosphopantetheine moiety from coenzyme A to a Ser of acyl-carrier-protein. This Vibrio parahaemolyticus serotype O3:K6 (strain RIMD 2210633) protein is Holo-[acyl-carrier-protein] synthase.